The chain runs to 324 residues: Alkanal monooxygenase beta chain (324 aa).

It belongs to the bacterial luciferase oxidoreductase family. As to quaternary structure, heterodimer of an alpha and a beta chain.

It carries out the reaction a long-chain fatty aldehyde + FMNH2 + O2 = a long-chain fatty acid + hnu + FMN + H2O + 2 H(+). Light-emitting reaction in luminous bacteria. The specific role of the beta subunit is unknown, but it is absolutely required for bioluminescence activity. The protein is Alkanal monooxygenase beta chain (luxB) of Photorhabdus laumondii subsp. laumondii (strain DSM 15139 / CIP 105565 / TT01) (Photorhabdus luminescens subsp. laumondii).